The following is a 300-amino-acid chain: N-acetylmuramic acid 6-phosphate etherase (300 aa).

Residues 57 to 220 enclose the SIS domain; it reads VAAALRAGGR…STGAMIRIGK (164 aa). Glu85 acts as the Proton donor in catalysis. Glu116 is an active-site residue.

The protein belongs to the GCKR-like family. MurNAc-6-P etherase subfamily. Homodimer.

The enzyme catalyses N-acetyl-D-muramate 6-phosphate + H2O = N-acetyl-D-glucosamine 6-phosphate + (R)-lactate. The protein operates within amino-sugar metabolism; 1,6-anhydro-N-acetylmuramate degradation. It functions in the pathway amino-sugar metabolism; N-acetylmuramate degradation. It participates in cell wall biogenesis; peptidoglycan recycling. Functionally, specifically catalyzes the cleavage of the D-lactyl ether substituent of MurNAc 6-phosphate, producing GlcNAc 6-phosphate and D-lactate. Together with AnmK, is also required for the utilization of anhydro-N-acetylmuramic acid (anhMurNAc) either imported from the medium or derived from its own cell wall murein, and thus plays a role in cell wall recycling. This Klebsiella aerogenes (Enterobacter aerogenes) protein is N-acetylmuramic acid 6-phosphate etherase.